We begin with the raw amino-acid sequence, 839 residues long: MMSGVMLLVFAIFLIIAFTLIYLAIYFKFDETTYTKRLQVMIEYIKRTNADEPTPNVIGYVSDITQNTYTVTWFNTVDLSTYQESVHDDRNEIFDFLNQKLQPVDRIVHDRVRANDENPNEFILSGDKDDVTMKCPAYFNFDYAQLKCVPVPPCDNKPAGRYPMDERLLDTLVLNQHLDKDYSSNEHLYHPTFYLRCFANGAHAVEECPDNYTFDAKTRQCKVNELCENRPDGYILSYFPSNLLVNQFMQCVSGRHVVRECPANKIFDRNLMSCVEAHPCTFNGAGHTYITADISDAQYFKCLNNNESQLMTCINRIRNSDNQYECSGDSRCIDLPNGTGQQVFKHADDDISYNSGQLVCDNFEIISNIECDQSNVFENKLFMDKFRLNMQFPTEVFDGTACVPATADNVNFLRSTFAIENIPNHYDIDMQTSMLGKIEMIKQLVSKDLSLNNDAIFAQWLLYARDKNAIGLNPLTGEPIDCFGNNLYDVFDARRANVCKDLGKSVLKTLNFGDGEFLNVLSDTLTGKDEDYRQFCAISYENGQKIVENEHFQRRILTNILQSDVCANIYTTLYQKYTTLNPKYTTTPLQYNRILVKRPKNIEIYGANTRLKNATIPKNATTISPVFNPFENQPNNRQNDSISPLFNPFQTTDAVWYSEPDGDEAVAPPPTAPPPPSEPEPEPEPELPSPLILDNKDLFYSCHYSVPFFKLTSCHAENDVIINALNELRNNVKVDADCESAKDLSHVLNAYAYVGNGIGCRSAYDGDAIVVKKEAVPSHVYANLNTQSNDGVKYNRWLHVKNDQYMACPEELYDNDEFKCNVESDKLYYLDNLQEDSIV.

The first 23 residues, 1–23 (MMSGVMLLVFAIFLIIAFTLIYL), serve as a signal peptide directing secretion. The C2HC BV-type zinc finger occupies 148 to 197 (CVPVPPCDNKPAGRYPMDERLLDTLVLNQHLDKDYSSNEHLYHPTFYLRC). 2 cysteine pairs are disulfide-bonded: Cys-208–Cys-221 and Cys-261–Cys-274. Residue Asn-211 is glycosylated (N-linked (GlcNAc...) asparagine; by host). The region spanning 224–282 (NELCENRPDGYILSYFPSNLLVNQFMQCVSGRHVVRECPANKIFDRNLMSCVEAHPCTF) is the Chitin-binding type-2 domain. Asn-306, Asn-337, Asn-613, Asn-619, and Asn-639 each carry an N-linked (GlcNAc...) asparagine; by host glycan. 2 disordered regions span residues 624–644 (SPVF…SISP) and 659–690 (EPDG…LPSP). A compositionally biased stretch (pro residues) spans 667-678 (APPPTAPPPPSE).

Its subcellular location is the virion. Probable capsid-associated protein. In Bombyx mori nuclear polyhedrosis virus (BmNPV), this protein is Capsid-associated protein Vp91 (p95).